We begin with the raw amino-acid sequence, 114 residues long: N(4)-acetylcytidine amidohydrolase (114 aa).

The region spanning 8 to 93 (TFFEFLTPLV…ALIQEIYPNI (86 aa)) is the ASCH domain. Lysine 22 (proton acceptor) is an active-site residue. Residue threonine 25 is the Nucleophile of the active site. Glutamate 75 acts as the Proton donor in catalysis.

This sequence belongs to the N(4)-acetylcytidine amidohydrolase family.

It catalyses the reaction N(4)-acetylcytidine + H2O = cytidine + acetate + H(+). The enzyme catalyses N(4)-acetyl-2'-deoxycytidine + H2O = 2'-deoxycytidine + acetate + H(+). The catalysed reaction is N(4)-acetylcytosine + H2O = cytosine + acetate + H(+). Functionally, catalyzes the hydrolysis of N(4)-acetylcytidine (ac4C). This chain is N(4)-acetylcytidine amidohydrolase, found in Vibrio cholerae serotype O1 (strain ATCC 39541 / Classical Ogawa 395 / O395).